We begin with the raw amino-acid sequence, 424 residues long: NuA4 complex subunit EAF3 homolog (424 aa).

One can recognise a Tudor-knot domain in the interval 23-73 (VDGERVLCFHGPLIYEAKVLKTKPDATPVEYYIHYAGWSKNWDEWVPENRV). The tract at residues 88–243 (ARQCGERSKK…STPTTEPAPC (156 aa)) is disordered. Basic residues predominate over residues 97-106 (KDNKKGSAKA). Residues 107 to 116 (KKMEQMRNES) show a composition bias toward basic and acidic residues. Ser119 carries the post-translational modification Phosphoserine. Residues 122–165 (SKDSNTSQSTASSTPTTSAGPGSKSEAGSTGTTTTNSTANSTTS) show a composition bias toward low complexity. Phosphothreonine occurs at positions 175, 183, 196, and 197. A Phosphoserine modification is found at Ser211. The span at 232 to 242 (TPSTPTTEPAP) shows a compositional bias: low complexity. Thr235 bears the Phosphothreonine mark. The MRG domain occupies 252 to 424 (AKVEVKIKIP…VDPEYVRNAQ (173 aa)).

In terms of assembly, component of the Tip60 chromatin-remodeling complex which contains the catalytic subunit Tip60 and the subunits Domino, Tra1, Brd8, E(Pc), DMAP1, Pontin, Reptin, Ing3, Act87E, BAP55, Mrg15, MrgBP, Gas41 and YL-1.

It localises to the nucleus. Functionally, part of the Tip60 chromatin-remodeling complex which is involved in DNA repair. Upon induction of DNA double-strand breaks, this complex acetylates phosphorylated H2AV in nucleosomes and exchanges it with unmodified H2AV. This Drosophila melanogaster (Fruit fly) protein is NuA4 complex subunit EAF3 homolog (MRG15).